The following is a 161-amino-acid chain: 2-C-methyl-D-erythritol 2,4-cyclodiphosphate synthase (161 aa).

A divalent metal cation contacts are provided by Asp10 and His12. Residues 10–12 (DVH) and 36–37 (HS) each bind 4-CDP-2-C-methyl-D-erythritol 2-phosphate. His44 contributes to the a divalent metal cation binding site. Residues 58–60 (DIG), 63–67 (FSDTD), and Arg144 contribute to the 4-CDP-2-C-methyl-D-erythritol 2-phosphate site.

Belongs to the IspF family. In terms of assembly, homotrimer. Requires a divalent metal cation as cofactor.

It catalyses the reaction 4-CDP-2-C-methyl-D-erythritol 2-phosphate = 2-C-methyl-D-erythritol 2,4-cyclic diphosphate + CMP. It participates in isoprenoid biosynthesis; isopentenyl diphosphate biosynthesis via DXP pathway; isopentenyl diphosphate from 1-deoxy-D-xylulose 5-phosphate: step 4/6. Involved in the biosynthesis of isopentenyl diphosphate (IPP) and dimethylallyl diphosphate (DMAPP), two major building blocks of isoprenoid compounds. Catalyzes the conversion of 4-diphosphocytidyl-2-C-methyl-D-erythritol 2-phosphate (CDP-ME2P) to 2-C-methyl-D-erythritol 2,4-cyclodiphosphate (ME-CPP) with a corresponding release of cytidine 5-monophosphate (CMP). The polypeptide is 2-C-methyl-D-erythritol 2,4-cyclodiphosphate synthase (Burkholderia ambifaria (strain MC40-6)).